A 266-amino-acid chain; its full sequence is Glucosamine-6-phosphate deaminase (266 aa).

Catalysis depends on Asp72, which acts as the Proton acceptor; for enolization step. Asp141 acts as the For ring-opening step in catalysis. Catalysis depends on His143, which acts as the Proton acceptor; for ring-opening step. Glu148 functions as the For ring-opening step in the catalytic mechanism.

It belongs to the glucosamine/galactosamine-6-phosphate isomerase family. NagB subfamily. Homohexamer.

It catalyses the reaction alpha-D-glucosamine 6-phosphate + H2O = beta-D-fructose 6-phosphate + NH4(+). Its pathway is amino-sugar metabolism; N-acetylneuraminate degradation; D-fructose 6-phosphate from N-acetylneuraminate: step 5/5. Its activity is regulated as follows. Allosterically activated by N-acetylglucosamine 6-phosphate (GlcNAc6P). Functionally, catalyzes the reversible isomerization-deamination of glucosamine 6-phosphate (GlcN6P) to form fructose 6-phosphate (Fru6P) and ammonium ion. This Salmonella arizonae (strain ATCC BAA-731 / CDC346-86 / RSK2980) protein is Glucosamine-6-phosphate deaminase.